The primary structure comprises 92 residues: Small ribosomal subunit protein uS19 (92 aa).

Belongs to the universal ribosomal protein uS19 family.

Protein S19 forms a complex with S13 that binds strongly to the 16S ribosomal RNA. In Dinoroseobacter shibae (strain DSM 16493 / NCIMB 14021 / DFL 12), this protein is Small ribosomal subunit protein uS19.